The primary structure comprises 620 residues: Protein AFR1 (620 aa).

The span at 1 to 12 (MEGSYLSAQENQ) shows a compositional bias: polar residues. A disordered region spans residues 1–20 (MEGSYLSAQENQPIPERLIP). A phosphoserine mark is found at Ser-472 and Ser-526.

This sequence to yeast YER158C.

In terms of biological role, acts in conjunction with the alpha-factor receptor to promote morphogenesis and adaptation. In Saccharomyces cerevisiae (strain ATCC 204508 / S288c) (Baker's yeast), this protein is Protein AFR1 (AFR1).